Reading from the N-terminus, the 307-residue chain is Manganese-dependent inorganic pyrophosphatase (307 aa).

Mn(2+) contacts are provided by H7, D11, D13, D66, H88, and D147.

The cofactor is Mn(2+).

It is found in the cytoplasm. It catalyses the reaction diphosphate + H2O = 2 phosphate + H(+). This chain is Manganese-dependent inorganic pyrophosphatase (ppaC), found in Methanocaldococcus jannaschii (strain ATCC 43067 / DSM 2661 / JAL-1 / JCM 10045 / NBRC 100440) (Methanococcus jannaschii).